Here is a 497-residue protein sequence, read N- to C-terminus: Cysteine--tRNA ligase (497 aa).

Cys-32 contributes to the Zn(2+) binding site. The 'HIGH' region motif lies at 34-44 (PTVYGEGHLGH). Cys-228, His-253, and Glu-257 together coordinate Zn(2+). The 'KMSKS' region motif lies at 285-289 (KMGKS). Lys-288 contacts ATP.

It belongs to the class-I aminoacyl-tRNA synthetase family. As to quaternary structure, monomer. Zn(2+) serves as cofactor.

It localises to the cytoplasm. It carries out the reaction tRNA(Cys) + L-cysteine + ATP = L-cysteinyl-tRNA(Cys) + AMP + diphosphate. This Cytophaga hutchinsonii (strain ATCC 33406 / DSM 1761 / CIP 103989 / NBRC 15051 / NCIMB 9469 / D465) protein is Cysteine--tRNA ligase.